A 161-amino-acid chain; its full sequence is Small ribosomal subunit protein uS9 (161 aa).

The interval 1–38 is disordered; that stretch reads MAQTITSLADLKQGPGAEPAGLSAEPQEPKLDKEGRAY. The span at 27 to 38 shows a compositional bias: basic and acidic residues; sequence QEPKLDKEGRAY.

Belongs to the universal ribosomal protein uS9 family.

In Rhodospirillum centenum (strain ATCC 51521 / SW), this protein is Small ribosomal subunit protein uS9.